Reading from the N-terminus, the 175-residue chain is uncharacterized protein (175 aa).

This sequence belongs to the asfivirus B175L family.

This is an uncharacterized protein from Ornithodoros (relapsing fever ticks).